The sequence spans 338 residues: Glyceraldehyde-3-phosphate dehydrogenase (338 aa).

NAD(+) contacts are provided by residues 12–13 (RI), Asp34, and Arg79. D-glyceraldehyde 3-phosphate is bound by residues 150-152 (SCT), Thr181, 210-211 (TG), and Arg233. Cys151 acts as the Nucleophile in catalysis. Asn316 serves as a coordination point for NAD(+).

The protein belongs to the glyceraldehyde-3-phosphate dehydrogenase family. Homotetramer.

It is found in the cytoplasm. The catalysed reaction is D-glyceraldehyde 3-phosphate + phosphate + NAD(+) = (2R)-3-phospho-glyceroyl phosphate + NADH + H(+). It participates in carbohydrate degradation; glycolysis; pyruvate from D-glyceraldehyde 3-phosphate: step 1/5. The polypeptide is Glyceraldehyde-3-phosphate dehydrogenase (GPD) (Yarrowia lipolytica (strain CLIB 122 / E 150) (Yeast)).